Here is a 307-residue protein sequence, read N- to C-terminus: tRNA pseudouridine synthase B (307 aa).

The Nucleophile role is filled by Asp-48.

Belongs to the pseudouridine synthase TruB family. Type 1 subfamily.

The catalysed reaction is uridine(55) in tRNA = pseudouridine(55) in tRNA. In terms of biological role, responsible for synthesis of pseudouridine from uracil-55 in the psi GC loop of transfer RNAs. The chain is tRNA pseudouridine synthase B from Neisseria meningitidis serogroup B (strain ATCC BAA-335 / MC58).